The primary structure comprises 76 residues: MAGTGIIAIAAAIAAFTGIGAGIGISLATGKAVEGIARQPEAAGSIRTSLLLGAALAEATAIYGLVVALVLVFLKM.

A run of 2 helical transmembrane segments spans residues 5 to 25 and 54 to 74; these read GIIA…GIGI and AALA…LVFL.

This sequence belongs to the ATPase C chain family. As to quaternary structure, F-type ATPases have 2 components, F(1) - the catalytic core - and F(0) - the membrane proton channel. F(1) has five subunits: alpha(3), beta(3), gamma(1), delta(1), epsilon(1). F(0) has three main subunits: a(1), b(2) and c(10-14). The alpha and beta chains form an alternating ring which encloses part of the gamma chain. F(1) is attached to F(0) by a central stalk formed by the gamma and epsilon chains, while a peripheral stalk is formed by the delta and b chains.

It is found in the cell membrane. Functionally, f(1)F(0) ATP synthase produces ATP from ADP in the presence of a proton or sodium gradient. F-type ATPases consist of two structural domains, F(1) containing the extramembraneous catalytic core and F(0) containing the membrane proton channel, linked together by a central stalk and a peripheral stalk. During catalysis, ATP synthesis in the catalytic domain of F(1) is coupled via a rotary mechanism of the central stalk subunits to proton translocation. In terms of biological role, key component of the F(0) channel; it plays a direct role in translocation across the membrane. A homomeric c-ring of between 10-14 subunits forms the central stalk rotor element with the F(1) delta and epsilon subunits. The sequence is that of ATP synthase subunit c from Ruminiclostridium cellulolyticum (strain ATCC 35319 / DSM 5812 / JCM 6584 / H10) (Clostridium cellulolyticum).